The primary structure comprises 138 residues: Biopolymer transport protein exbD1 (138 aa).

Over 1–16 (MIKSSAKHNDFGLTPD) the chain is Cytoplasmic. A helical transmembrane segment spans residues 17 to 37 (LTPLLDIIFIVMVFLLLTASV). The Periplasmic portion of the chain corresponds to 38–138 (RLESLEVALP…TQLLTEPSHS (101 aa)).

It belongs to the ExbD/TolR family. The accessory proteins ExbB and ExbD seem to form a complex with TonB.

The protein resides in the cell inner membrane. Its function is as follows. Involved in the TonB-dependent energy-dependent transport of various receptor-bound substrates. In Vibrio cholerae serotype O1 (strain ATCC 39315 / El Tor Inaba N16961), this protein is Biopolymer transport protein exbD1 (exbD1).